Consider the following 104-residue polypeptide: NADH dehydrogenase [ubiquinone] flavoprotein 3, mitochondrial (104 aa).

A mitochondrion-targeting transit peptide spans 1 to 35 (MAVSLLLRGGRIRALKAVLLEARVFPGELVSVVRL). Over residues 38-50 (ESEKSAKEKELHP) the composition is skewed to basic and acidic residues. The segment at 38 to 68 (ESEKSAKEKELHPKTQSVLKEPEPTDTTTYK) is disordered. At Ser101 the chain carries Phosphoserine.

It belongs to the complex I NDUFV3 subunit family. As to quaternary structure, complex I is composed of 45 different subunits. This is a component of the flavoprotein-sulfur (FP) fragment of the enzyme.

The protein localises to the mitochondrion inner membrane. Accessory subunit of the mitochondrial membrane respiratory chain NADH dehydrogenase (Complex I), that is believed not to be involved in catalysis. Complex I functions in the transfer of electrons from NADH to the respiratory chain. The immediate electron acceptor for the enzyme is believed to be ubiquinone. May be the terminally assembled subunit of Complex I. This chain is NADH dehydrogenase [ubiquinone] flavoprotein 3, mitochondrial (Ndufv3), found in Mus musculus (Mouse).